Consider the following 285-residue polypeptide: Small ribosomal subunit biogenesis GTPase RsgA (285 aa).

Positions Lys61 to Phe215 constitute a CP-type G domain. Residues Thr110–Asp113 and Gly159–Ser167 contribute to the GTP site. Residues Cys239, Cys244, His246, and Cys254 each coordinate Zn(2+).

This sequence belongs to the TRAFAC class YlqF/YawG GTPase family. RsgA subfamily. In terms of assembly, monomer. Associates with 30S ribosomal subunit, binds 16S rRNA. Zn(2+) serves as cofactor.

The protein localises to the cytoplasm. Its function is as follows. One of several proteins that assist in the late maturation steps of the functional core of the 30S ribosomal subunit. Helps release RbfA from mature subunits. May play a role in the assembly of ribosomal proteins into the subunit. Circularly permuted GTPase that catalyzes slow GTP hydrolysis, GTPase activity is stimulated by the 30S ribosomal subunit. The polypeptide is Small ribosomal subunit biogenesis GTPase RsgA (Mesomycoplasma hyopneumoniae (strain J / ATCC 25934 / NCTC 10110) (Mycoplasma hyopneumoniae)).